Consider the following 429-residue polypeptide: Serine--tRNA ligase (429 aa).

235–237 (TAE) is a binding site for L-serine. 266–268 (RSE) serves as a coordination point for ATP. Glu-289 is an L-serine binding site. An ATP-binding site is contributed by 353 to 356 (EISS). Ser-389 is an L-serine binding site.

It belongs to the class-II aminoacyl-tRNA synthetase family. Type-1 seryl-tRNA synthetase subfamily. As to quaternary structure, homodimer. The tRNA molecule binds across the dimer.

Its subcellular location is the cytoplasm. It catalyses the reaction tRNA(Ser) + L-serine + ATP = L-seryl-tRNA(Ser) + AMP + diphosphate + H(+). It carries out the reaction tRNA(Sec) + L-serine + ATP = L-seryl-tRNA(Sec) + AMP + diphosphate + H(+). It functions in the pathway aminoacyl-tRNA biosynthesis; selenocysteinyl-tRNA(Sec) biosynthesis; L-seryl-tRNA(Sec) from L-serine and tRNA(Sec): step 1/1. Functionally, catalyzes the attachment of serine to tRNA(Ser). Is also able to aminoacylate tRNA(Sec) with serine, to form the misacylated tRNA L-seryl-tRNA(Sec), which will be further converted into selenocysteinyl-tRNA(Sec). This is Serine--tRNA ligase from Haemophilus influenzae (strain 86-028NP).